The chain runs to 265 residues: Shikimate dehydrogenase (NADP(+)) (265 aa).

Residues 15-17 (SKS) and Thr-62 each bind shikimate. Lys-66 (proton acceptor) is an active-site residue. Positions 87 and 102 each coordinate shikimate. NADP(+) is bound by residues 127–131 (GAGGA), 151–156 (NRTVSR), and Met-212. Shikimate is bound at residue Tyr-214. NADP(+) is bound at residue Gly-234.

Belongs to the shikimate dehydrogenase family. Homodimer.

It carries out the reaction shikimate + NADP(+) = 3-dehydroshikimate + NADPH + H(+). Its pathway is metabolic intermediate biosynthesis; chorismate biosynthesis; chorismate from D-erythrose 4-phosphate and phosphoenolpyruvate: step 4/7. Its function is as follows. Involved in the biosynthesis of the chorismate, which leads to the biosynthesis of aromatic amino acids. Catalyzes the reversible NADPH linked reduction of 3-dehydroshikimate (DHSA) to yield shikimate (SA). This Thiobacillus denitrificans (strain ATCC 25259 / T1) protein is Shikimate dehydrogenase (NADP(+)).